The following is a 219-amino-acid chain: Transmembrane emp24 domain-containing protein 10 (219 aa).

A signal peptide spans 1 to 31; sequence MSGLSGPPARRGPFPLALLLLFLLGPRLVLA. A required for interaction with STX17 region spans residues 1–142; the sequence is MSGLSGPPAR…KNYEEIAKVE (142 aa). Residues 32-185 lie on the Lumenal side of the membrane; that stretch reads ISFHLPINSR…RDTNESTNTR (154 aa). In terms of domain architecture, GOLD spans 41–193; it reads RKCLREEIHK…TRVLYFSIFS (153 aa). Residues 147 to 178 form a required for TMED10 and TMED2 cis-Golgi network localization region; that stretch reads LEVELRRLEDLSESIVNDFAYMKKREEEMRDT. 2 positions are modified to dimethylated arginine: arginine 171 and arginine 176. An N-linked (GlcNAc...) asparagine glycan is attached at asparagine 179. Residues 186-206 traverse the membrane as a helical segment; it reads VLYFSIFSMFCLIGLATWQVF. The tract at residues 204–219 is interaction with COPG1; it reads QVFYLRRFFKAKKLIE. The Cytoplasmic segment spans residues 207 to 219; the sequence is YLRRFFKAKKLIE. The interval 207–219 is interaction with ARF1 and IL1B; it reads YLRRFFKAKKLIE. The short motif at 211 to 212 is the COPII vesicle coat-binding element; sequence FF. The COPI vesicle coat-binding signature appears at 211-219; it reads FFKAKKLIE.

Belongs to the EMP24/GP25L family. In terms of assembly, predominantly dimeric and to a lesser extent monomeric in the ER. Monomer and dimer in ERGIC and cis-Golgi network. Forms homooligomer (via GOLD domain); the assembly is promoted by direct binding with leaderless cargos and may form a protein channel that facilitates cargo entry into the ERGIC. Forms heterooligomeric complexes with other members of the p24 family such as TMED2, TMED7 and TMED9. Interacts (via GOLD domain) with TMED2 (via GOLD domain); the complex is required for export of TMED10 from the ER to the cis-Golgi network; the complex is proposed to be involved in cis-Golgi network dynamics and / or biogenesis. Associates with the COPI vesicle coat subunits (coatomer). Tetramerization of the cytoplasmic domain at the Golgi membrane in vitro; the complex is proposed to interact with COPI coatomer and induce budding of the vesicles. Interacts with COPG1; the interaction involves TMED10 homodimer. Interacts with ARF1 (GDP-bound); the interaction probably involves a TMED10 oligomer. Interacts with SEC23A, SEC24B, SEC24C and SEC24D components of the coat protein complex II/COPII, indicative of an association of TMED10 with the COPII vesicle coat. Interacts with CD59. Interacts with MPPE1/PGAP5; the complex might recruit and sort GPI-anchored proteins to the ER-exit site, or the interaction might lead to recycling of PGAP5 between the ER and the Golgi. Interacts with F2LR1/PAR2. Interacts with KDELR2/ERD2; the interaction is disrupted by KDELR2 ligand. Found in a complex composed at least of SURF4, TMED2 and TMED10. Associates with the presenilin-dependent gamma-secretase complex. Interacts with STX17; the interaction is direct. Interacts with IL-1; the interaction is direct. Interacts with RAB21 (active GTP-bound form); the interaction is indirect and regulates TMED10 abundance and localization at the Golgi.

It is found in the endoplasmic reticulum membrane. The protein localises to the endoplasmic reticulum-Golgi intermediate compartment membrane. The protein resides in the golgi apparatus membrane. It localises to the golgi apparatus. Its subcellular location is the cis-Golgi network membrane. It is found in the trans-Golgi network membrane. The protein localises to the cytoplasmic vesicle. The protein resides in the secretory vesicle membrane. It localises to the cell membrane. Its subcellular location is the melanosome. Functionally, cargo receptor involved in protein vesicular trafficking and quality control in the endoplasmic reticulum (ER) and Golgi. The p24 protein family is a group of transmembrane proteins that bind coat protein complex I/COPI and coat protein complex II/COPII involved in vesicular trafficking between the membranes. Acts at the lumenal side for incorporation of secretory cargo molecules into transport vesicles and involved in vesicle coat formation at the cytoplasmic side. Mainly functions in the early secretory pathway and cycles between the ER, ER-Golgi intermediate compartment (ERGIC) and Golgi, mediating cargo transport through COPI and COPII-coated vesicles. In COPII vesicle-mediated anterograde transport, involved in the transport of GPI-anchored proteins by acting together with TMED2 as their cargo receptor; the function specifically implies SEC24C and SEC24D of the COPII vesicle coat and lipid raft-like microdomains of the ER. Recognizes GPI anchors structural remodeled in the ER by the GPI inositol-deacylase/PGAP1 and the metallophosphoesterase MPPE1/PGAP5. In COPI vesicle-mediated retrograde transport, involved in the biogenesis of COPI vesicles and vesicle coat recruitment. Involved in trafficking of amyloid beta A4 protein and soluble APP-beta release (independent from the modulation of gamma-secretase activity). Involved in the KDELR2-mediated retrograde transport of the toxin A subunit (CTX-A-K63)together with COPI and the COOH terminus of KDELR2. On Golgi membranes, acts as a primary receptor for ARF1-GDP, a GTP-binding protein involved in COPI-vesicle formation. Increases coatomer-dependent GTPase-activating activity of ARFGAP2 which mediates the hydrolysis of ARF1-bound GTP and therefore modulates protein trafficking from the Golgi apparatus. Involved in the exocytic trafficking of G protein-coupled receptors F2LR1/PAR2 (trypsin and tryspin-like enzyme receptor), OPRM1 (opioid receptor) and P2RY4 (UTD and UDP receptor) from the Golgi to the plasma membrane, thus contributing to receptor resensitization. In addition to its cargo receptor activity, may also act as a protein channel after oligomerization, facilitating the post-translational entry of leaderless cytoplasmic cargo into the ERGIC. Involved in the translocation into ERGIC, the vesicle entry and the secretion of leaderless cargos (lacking the secretion signal sequence), including the mature form of interleukin 1/IL-1 family members, the alpha-crystallin B chain HSPB5, the carbohydrate-binding proteins galectin-1/LGALS1 and galectin-3/LGALS3, the microtubule-associated protein Tau/MAPT, and the annexin A1/ANXA1; the translocation process is dependent on cargo protein unfolding and enhanced by chaperones HSP90AB1 and HSP90B1/GRP9. Could also associates with the presenilin-dependent gamma-secretase complex in order to regulate gamma-cleavages of the amyloid beta A4 protein to yield amyloid-beta 40/Abeta40. This is Transmembrane emp24 domain-containing protein 10 from Homo sapiens (Human).